The following is a 192-amino-acid chain: MRLSSTNMDARKMLFAAILSICALSSKKILIYNEEMIVALCFIGFIIFSRKSLGTTFKVTLDGRIQAIQEELQQFPNPNEVVLLESNEQQRLLRISLRICGTVVESLPMARCAPKCEKTVQALLCRNLNVKLATLTNAISSRRIRFQDDLVTKFYTLVGKQFAYSCISKAERVEFIRESLVVLRMVRGGGFS.

A helical membrane pass occupies residues 29-49 (ILIYNEEMIVALCFIGFIIFS).

This sequence belongs to the ATPase protein MI25 family. In terms of assembly, F-type ATPases have 2 components, CF(1) - the catalytic core - and CF(0) - the membrane proton channel. CF(1) has five subunits: alpha(3), beta(3), gamma(1), delta(1), epsilon(1). CF(0) has three main subunits: a, b and c.

The protein localises to the mitochondrion membrane. Its function is as follows. This is one of the chains of the nonenzymatic component (CF(0) subunit) of the mitochondrial ATPase complex. The sequence is that of ATP synthase protein MI25 (ATP4) from Arabidopsis thaliana (Mouse-ear cress).